Consider the following 246-residue polypeptide: Probable site-specific recombinase in afa region (246 aa).

A Tyr recombinase domain is found at 40–225; sequence ATPAYLLAPE…FALDMAATLA (186 aa). Active-site residues include Arg-75, Lys-102, His-177, Arg-180, and His-203. Residue Tyr-212 is the O-(3'-phospho-DNA)-tyrosine intermediate of the active site.

It belongs to the 'phage' integrase family.

The protein is Probable site-specific recombinase in afa region (int) of Escherichia coli.